An 863-amino-acid polypeptide reads, in one-letter code: Receptor-like protein Cf-9 (863 aa).

Residues 1–21 (MDCVKLVFLMLYTFLCQLALS) form the signal peptide. Topologically, residues 22-812 (SSLPHLCPED…EEDSPMISWQ (791 aa)) are extracellular. Positions 24 to 91 (LPHLCPEDQA…GVHCDETTGQ (68 aa)) are N-cap. Asn-48, Asn-72, Asn-109, Asn-127, Asn-142, Asn-191, Asn-204, and Asn-212 each carry an N-linked (GlcNAc...) asparagine glycan. Residues 92–115 (VIALDLRCSQLQGKFHSNSSLFQL) form an LRR 1; degenerate repeat. LRR repeat units follow at residues 116-139 (SNLKRLDLSFNNFTGSLISPKFGE) and 141-164 (SNLTHLDLSHSSFTGLIPSEICHL). One copy of the LRR 4; degenerate repeat lies at 165-191 (SKLHVLRICDQYGLSLVPYNFELLLKN). LRR repeat units follow at residues 192-214 (LTQLRELNLESVNISSTIPSNFS), 215-238 (SHLTTLQLSGTELHGILPERVFHL), 241-263 (LQSLHLSVNPQLTVRFPTTKWNS), 265-287 (ASLMTLYVDSVNIADRIPKSFSH), 288-312 (LTSLHELYMGRCNLSGPIPKPLWNL), 314-335 (NIVFLHLGDNHLEGPISHFTIF), 336-358 (EKLKRLSLVNNNFDGGLEFLSFN), 359-382 (TQLERLDLSSNSLTGPIPSNISGL), 383-406 (QNLECLYLSSNHLNGSIPSWIFSL), 408-428 (SLVELDLSNNTFSGKIQEFKS), 429-452 (KTLSAVTLKQNKLKGRIPNSLLNQ), 454-476 (NLQLLLLSHNNISGHISSAICNL), 477-500 (KTLILLDLGSNNLEGTIPQCVVER), 502-524 (EYLSHLDLSKNRLSGTINTTFSV), 525-549 (GNILRVISLHGNKLTGKVPRSMINC), 551-572 (YLTLLDLGNNMLNDTFPNWLGY), 573-597 (LFQLKILSLRSNKLHGPIKSSGNTN), 599-623 (FMGLQILDLSSNGFSGNLPERILGN), 667-690 (LDSNMIINLSKNRFEGHIPSIIGD), 691-714 (LVGLRTLNLSHNVLEGHIPASFQN), 715-739 (LSVLESLDLSSNKISGEIPQQLASL), and 741-759 (FLEVLNLSHNHLVGCIPKG). Residue Asn-262 is glycosylated (N-linked (GlcNAc...) asparagine). Asn-300 and Asn-311 each carry an N-linked (GlcNAc...) asparagine glycan. N-linked (GlcNAc...) asparagine glycosylation is found at Asn-378, Asn-396, and Asn-416. Asn-464 is a glycosylation site (N-linked (GlcNAc...) asparagine). N-linked (GlcNAc...) asparagine glycosylation is present at Asn-519. A glycan (N-linked (GlcNAc...) asparagine) is linked at Asn-563. N-linked (GlcNAc...) asparagine glycosylation is found at Asn-698 and Asn-714. N-linked (GlcNAc...) asparagine glycosylation is found at Asn-746 and Asn-767. A C-cap/acidic domain region spans residues 760–812 (KQFDSFGNTSYQGNDGLRGFPLSKLCGGEDQVTTPAELDQEEEEEDSPMISWQ). The helical transmembrane segment at 813 to 833 (GVLVGYGCGLVIGLSVIYIMW) threads the bilayer. Over 834–863 (STQYPAWFSRMDLKLEHIITTKMKKHKKRY) the chain is Cytoplasmic.

Belongs to the RLP family. Interacts with thioredoxin-like protein CITRX.

It localises to the cell membrane. In terms of biological role, involved in plant defense. Confers resistance to the fungal pathogen C.fulvum through recognition of the AVR9 elicitor protein. The polypeptide is Receptor-like protein Cf-9 (Solanum pimpinellifolium (Currant tomato)).